The sequence spans 749 residues: Tryptophan 2-monooxygenase (749 aa).

Positions 232, 252, 260, and 280 each coordinate FMN. A substrate-binding site is contributed by Arg-280.

The protein belongs to the tryptophan 2-monooxygenase family. FMN serves as cofactor.

The enzyme catalyses L-tryptophan + O2 = indole-3-acetamide + CO2 + H2O. The protein operates within plant hormone metabolism; auxin biosynthesis. The chain is Tryptophan 2-monooxygenase (aux1) from Rhizobium rhizogenes (Agrobacterium rhizogenes).